The sequence spans 538 residues: NAD(P)H-quinone oxidoreductase chain 4 (538 aa).

14 helical membrane passes run 11–31, 43–63, 95–115, 119–139, 143–163, 175–195, 217–237, 251–271, 285–305, 314–334, 340–360, 382–404, 425–445, and 472–492; these read FPWL…VPFI, YALI…FKGF, MPLI…AWPV, PKLF…VFAV, LLFF…LAIW, FIIY…AMGF, GFQL…LPIV, TAPV…YALL, FAPL…LTSF, IAYS…SFSS, AMLQ…LVGA, IMFA…SGFI, IVVA…LLSM, and IYII…PKIM.

This sequence belongs to the complex I subunit 4 family.

It localises to the cellular thylakoid membrane. The catalysed reaction is a plastoquinone + NADH + (n+1) H(+)(in) = a plastoquinol + NAD(+) + n H(+)(out). The enzyme catalyses a plastoquinone + NADPH + (n+1) H(+)(in) = a plastoquinol + NADP(+) + n H(+)(out). Its function is as follows. NDH-1 shuttles electrons from NAD(P)H, via FMN and iron-sulfur (Fe-S) centers, to quinones in the respiratory chain. The immediate electron acceptor for the enzyme in this species is believed to be plastoquinone. Couples the redox reaction to proton translocation (for every two electrons transferred, four hydrogen ions are translocated across the cytoplasmic membrane), and thus conserves the redox energy in a proton gradient. The sequence is that of NAD(P)H-quinone oxidoreductase chain 4 from Prochlorococcus marinus (strain NATL1A).